The sequence spans 330 residues: Cobalamin biosynthesis protein CobD (330 aa).

Helical transmembrane passes span 60-80 (TLVI…PPIV), 153-173 (GIIA…LLGV), 227-247 (LGIV…WKIF), and 308-328 (IVLF…FVLT).

It belongs to the CobD/CbiB family.

The protein localises to the cell membrane. The protein operates within cofactor biosynthesis; adenosylcobalamin biosynthesis. In terms of biological role, converts cobyric acid to cobinamide by the addition of aminopropanol on the F carboxylic group. The protein is Cobalamin biosynthesis protein CobD of Desulfotalea psychrophila (strain LSv54 / DSM 12343).